The following is a 510-amino-acid chain: Sulfoquinovosyl transferase SQD2 (510 aa).

The transit peptide at methionine 1–arginine 83 directs the protein to the chloroplast. Serine 88 bears the Phosphoserine mark. A helical transmembrane segment spans residues proline 198–methionine 218.

The protein belongs to the glycosyltransferase group 1 family. Glycosyltransferase 4 subfamily.

The protein resides in the plastid. It localises to the chloroplast membrane. It catalyses the reaction UDP-alpha-D-6-sulfoquinovose + a 1,2-diacyl-sn-glycerol = a 6-sulfo-alpha-D-quinovosyldiacylglycerol + UDP + H(+). It participates in glycolipid biosynthesis. In terms of biological role, catalyzes the transfer of the sulfoquinovose moiety from UDP-sulfoquinovose to diacylglycerol during sulfolipid biosynthesis. Sulfolipid contributes to maintaining a negatively charged lipid-water interface, a requirement for proper function of photosynthetic membranes. Sulfolipid may also function as a substitute of anionic phospholipids under phosphate-limited growth conditions. This is Sulfoquinovosyl transferase SQD2 from Arabidopsis thaliana (Mouse-ear cress).